The sequence spans 87 residues: Small ribosomal subunit protein bS20 (87 aa).

The interval 1–28 (MANIKSQQKRNRTNERARLRNKSVKSSL) is disordered.

Belongs to the bacterial ribosomal protein bS20 family.

Binds directly to 16S ribosomal RNA. The sequence is that of Small ribosomal subunit protein bS20 from Mycobacterium marinum (strain ATCC BAA-535 / M).